A 320-amino-acid polypeptide reads, in one-letter code: Lipoyl synthase (320 aa).

The segment at 1 to 28 (MVTVVDRVTDRRLRHPEKAHRPDTSVQK) is disordered. A compositionally biased stretch (basic and acidic residues) spans 19–28 (AHRPDTSVQK). Residues Cys-59, Cys-64, Cys-70, Cys-85, Cys-89, Cys-92, and Ser-298 each coordinate [4Fe-4S] cluster. A Radical SAM core domain is found at 71–287 (WSQRHASFMI…AKIGKVKGFL (217 aa)).

Belongs to the radical SAM superfamily. Lipoyl synthase family. [4Fe-4S] cluster is required as a cofactor.

The protein localises to the cytoplasm. It carries out the reaction [[Fe-S] cluster scaffold protein carrying a second [4Fe-4S](2+) cluster] + N(6)-octanoyl-L-lysyl-[protein] + 2 oxidized [2Fe-2S]-[ferredoxin] + 2 S-adenosyl-L-methionine + 4 H(+) = [[Fe-S] cluster scaffold protein] + N(6)-[(R)-dihydrolipoyl]-L-lysyl-[protein] + 4 Fe(3+) + 2 hydrogen sulfide + 2 5'-deoxyadenosine + 2 L-methionine + 2 reduced [2Fe-2S]-[ferredoxin]. It participates in protein modification; protein lipoylation via endogenous pathway; protein N(6)-(lipoyl)lysine from octanoyl-[acyl-carrier-protein]: step 2/2. Catalyzes the radical-mediated insertion of two sulfur atoms into the C-6 and C-8 positions of the octanoyl moiety bound to the lipoyl domains of lipoate-dependent enzymes, thereby converting the octanoylated domains into lipoylated derivatives. The chain is Lipoyl synthase from Bartonella henselae (strain ATCC 49882 / DSM 28221 / CCUG 30454 / Houston 1) (Rochalimaea henselae).